Here is a 510-residue protein sequence, read N- to C-terminus: Propionyl-CoA carboxylase beta chain (510 aa).

One can recognise a CoA carboxyltransferase N-terminal domain in the interval 1–257 (MKDILEQLED…NNREKPPVRP (257 aa)). The tract at residues 1 to 504 (MKDILEQLED…NKSVQMPWKK (504 aa)) is carboxyltransferase. A CoA carboxyltransferase C-terminal domain is found at 261–504 (DPDRIEPSLD…NKSVQMPWKK (244 aa)). Residues 292–325 (DEGDFYEIQEEFAKNIITGFIRLEGRTVGVVANQ) form an acyl-CoA binding region.

The protein belongs to the AccD/PCCB family. The holoenzyme is a dodecamer composed of 6 PccA/alpha subunits and 6 PccB/beta subunits.

The enzyme catalyses propanoyl-CoA + hydrogencarbonate + ATP = (S)-methylmalonyl-CoA + ADP + phosphate + H(+). It participates in metabolic intermediate metabolism; propanoyl-CoA degradation; succinyl-CoA from propanoyl-CoA: step 1/3. This is one of the 2 subunits of the biotin-dependent propionyl-CoA carboxylase (PCC), the enzyme catalyzing the carboxylation of propionyl-CoA/propanoyl-CoA to D-methylmalonyl-CoA/(S)-methylmalonyl-CoA. Within the holoenzyme, the alpha subunit catalyzes the ATP-dependent carboxylation of the biotin carried by the biotin carboxyl carrier (BCC) domain, while the beta subunit then tranfers the carboxyl group from carboxylated biotin to propionyl-CoA. The sequence is that of Propionyl-CoA carboxylase beta chain from Roseobacter denitrificans (strain ATCC 33942 / OCh 114) (Erythrobacter sp. (strain OCh 114)).